The chain runs to 639 residues: Transcription factor phomR (639 aa).

The segment at residues C14 to C41 is a DNA-binding region (zn(2)-C6 fungal-type). Disordered stretches follow at residues R58–G136 and L476–E499. The span at S68 to S108 shows a compositional bias: low complexity.

Its subcellular location is the nucleus. Its function is as follows. Transcription factor; part of the gene cluster that mediates the biosynthesis of the phomopsins, a group of hexapeptide mycotoxins which infects lupins and causes lupinosis disease in livestock. May play a role in the regulation of the production of phomopsins. This Diaporthe leptostromiformis (Lupinosis disease fungus) protein is Transcription factor phomR.